A 4650-amino-acid polypeptide reads, in one-letter code: Nonribosomal peptide synthetase lenA (4650 aa).

Residues 227–628 form an adenylation 1 region; sequence GSILDTIRAK…DGSVIHVGRK (402 aa). Positions 773 to 849 constitute a Carrier 1 domain; that stretch reads PPETVLEKAL…KLAQYLRNTE (77 aa). Residue S810 is modified to O-(pantetheine 4'-phosphoryl)serine. The segment at 890–1212 is condensation 1; sequence EDCYPCTALQ…CDFQSQLIFQ (323 aa). Positions 1288-1622 are adenylation 2; sequence ELELNAQKEP…RKIRPGYLGR (335 aa). The 78-residue stretch at 1745–1822 folds into the Carrier 2 domain; sequence PPVSAAEKKW…EIAALSETRD (78 aa). S1782 is modified (O-(pantetheine 4'-phosphoryl)serine). Residues 1850–2110 are condensation 2; that stretch reads ATNLIAATVH…GEKTRPGGGA (261 aa). An adenylation 3 region spans residues 2183–2511; sequence RCVHDLVHDA…RTGDLIKLRG (329 aa). A Carrier 3 domain is found at 2630–2708; sequence APQNRLQHDI…EADVGLDHAS (79 aa). S2667 is modified (O-(pantetheine 4'-phosphoryl)serine). The epimerase stretch occupies residues 2722 to 2998; that stretch reads ESMARALAVI…KDARRRSPAN (277 aa). Residues 3128 to 3565 are condensation 3; that stretch reads VQDVYPCTPI…VDDSQRQQIL (438 aa). Residues 3578 to 3980 form an adenylation 4 region; sequence CVHHIIHQRC…FVGRKDNQIK (403 aa). Residues 4114–4190 enclose the Carrier 4 domain; sequence TPSTPLEAQL…QLAAVLEEGA (77 aa). S4151 bears the O-(pantetheine 4'-phosphoryl)serine mark. The tract at residues 4249-4648 is condensation 4; that stretch reads HMVLTFSQPV…TTTPEKLVAE (400 aa).

Belongs to the NRP synthetase family. It depends on pantetheine 4'-phosphate as a cofactor.

It functions in the pathway alkaloid biosynthesis. Functionally, nonribosomal peptide synthetase; part of the gene cluster that mediates the biosynthesis of the ergot alkaloids lentopeptins A and B. Within the pathway, lenA catalyzes the biosynthesis of the Ala-Val-Ala peptide chain, including a cinnamic acid moiety as the starting unit. The release of the peptide from the enzyme is accomplished via a cyclization reaction catalyzed by the terminal condensation-like (Ct) domain of lenA to form the N-acyldiketopiperazine intermediate. The reaction appears to proceed through a nucleophilic attack on the carbonyl carbon by a lone electron pair of the valine amide nitrogen. The phenylalanine ammonia-lyase lenB provides the starter unit for the synthesis of the N-acyldiketopiperazine intermediate by the NRPS lenA, while the cytochrome P450 monooxygenase lenC is involved in the post-NRPS oxidative modification steps to form lentopeptins A and B. The polypeptide is Nonribosomal peptide synthetase lenA (Aspergillus lentulus).